The sequence spans 200 residues: Peptidyl-tRNA hydrolase (200 aa).

Tyr15 is a tRNA binding site. His20 serves as the catalytic Proton acceptor. TRNA contacts are provided by Phe66, Asn68, and Asn114.

This sequence belongs to the PTH family. Monomer.

The protein localises to the cytoplasm. The catalysed reaction is an N-acyl-L-alpha-aminoacyl-tRNA + H2O = an N-acyl-L-amino acid + a tRNA + H(+). Its function is as follows. Hydrolyzes ribosome-free peptidyl-tRNAs (with 1 or more amino acids incorporated), which drop off the ribosome during protein synthesis, or as a result of ribosome stalling. In terms of biological role, catalyzes the release of premature peptidyl moieties from peptidyl-tRNA molecules trapped in stalled 50S ribosomal subunits, and thus maintains levels of free tRNAs and 50S ribosomes. This Ralstonia pickettii (strain 12J) protein is Peptidyl-tRNA hydrolase.